Here is a 515-residue protein sequence, read N- to C-terminus: Thioredoxin domain-containing protein 2 (515 aa).

Positions 1 to 23 are disordered; sequence MTLNNGGKANERGSNENPLQALS. Phosphoserine is present on residues serine 14 and serine 39. The interval 51–390 is disordered; it reads TLHMSTEESE…NTIKSSEEDV (340 aa). 2 stretches are compositionally biased toward polar residues: residues 61 to 75 and 85 to 136; these read FPQQ…SENT and KPSS…TNST. Tandem repeats lie at residues 92-106, 107-121, 122-136, 137-151, 152-166, 167-181, 182-196, 197-211, 212-226, 227-241, 242-256, 257-271, 272-286, 287-301, 302-316, 317-331, 332-346, 347-362, 363-375, 376-390, and 391-405. Residues 92–405 are 21 X 15 AA approximate tandem repeat of Q-P-K-X-G-D-I-P-K-S-[PS]-E-[KE]-X-I; that stretch reads QLKQENISKS…KLLGLGAEIE (314 aa). 2 stretches are compositionally biased toward basic and acidic residues: residues 137–293 and 302–358; these read HYRE…ETKV and QSKE…KSPE. Serine 146 carries the phosphoserine modification. The span at 375 to 384 shows a compositional bias: polar residues; that stretch reads IQSQEGNTIK. Residues 398-515 form the Thioredoxin domain; sequence LGLGAEIETL…KLERSISELK (118 aa). Cysteine 442 and cysteine 445 are disulfide-bonded.

In terms of tissue distribution, testis-specific. Strongly expressed in the testicular seminiferous tubules, mostly in the round spermatids.

The protein localises to the cytoplasm. In terms of biological role, probably plays a regulatory role in sperm development. May participate in regulation of fibrous sheath (FS) assembly by supporting the formation of disulfide bonds during sperm tail morphogenesis. May also be required to rectify incorrect disulfide pairing and generate suitable pairs between the FS constituents. Can reduce disulfide bonds in vitro in the presence of NADP and thioredoxin reductase. This Mus musculus (Mouse) protein is Thioredoxin domain-containing protein 2 (Txndc2).